The sequence spans 517 residues: Bifunctional purine biosynthesis protein PurH (517 aa).

Positions 1 to 151 (MTQERKIKRA…KNFAHVAVLC (151 aa)) constitute an MGS-like domain.

The protein belongs to the PurH family.

It carries out the reaction (6R)-10-formyltetrahydrofolate + 5-amino-1-(5-phospho-beta-D-ribosyl)imidazole-4-carboxamide = 5-formamido-1-(5-phospho-D-ribosyl)imidazole-4-carboxamide + (6S)-5,6,7,8-tetrahydrofolate. It catalyses the reaction IMP + H2O = 5-formamido-1-(5-phospho-D-ribosyl)imidazole-4-carboxamide. The protein operates within purine metabolism; IMP biosynthesis via de novo pathway; 5-formamido-1-(5-phospho-D-ribosyl)imidazole-4-carboxamide from 5-amino-1-(5-phospho-D-ribosyl)imidazole-4-carboxamide (10-formyl THF route): step 1/1. Its pathway is purine metabolism; IMP biosynthesis via de novo pathway; IMP from 5-formamido-1-(5-phospho-D-ribosyl)imidazole-4-carboxamide: step 1/1. This is Bifunctional purine biosynthesis protein PurH from Elusimicrobium minutum (strain Pei191).